A 214-amino-acid chain; its full sequence is Urease accessory protein UreF (214 aa).

Residues 70 to 95 are disordered; that stretch reads AAAGEAGDAETDARTPSPAARAASRA. The segment covering 83–95 has biased composition (low complexity); the sequence is RTPSPAARAASRA.

It belongs to the UreF family. In terms of assembly, ureD, UreF and UreG form a complex that acts as a GTP-hydrolysis-dependent molecular chaperone, activating the urease apoprotein by helping to assemble the nickel containing metallocenter of UreC. The UreE protein probably delivers the nickel.

It localises to the cytoplasm. In terms of biological role, required for maturation of urease via the functional incorporation of the urease nickel metallocenter. In Mycolicibacterium vanbaalenii (strain DSM 7251 / JCM 13017 / BCRC 16820 / KCTC 9966 / NRRL B-24157 / PYR-1) (Mycobacterium vanbaalenii), this protein is Urease accessory protein UreF.